The sequence spans 251 residues: Ubiquinone biosynthesis O-methyltransferase (251 aa).

The S-adenosyl-L-methionine site is built by Arg-36, Gly-61, Asp-82, and Ile-124.

This sequence belongs to the methyltransferase superfamily. UbiG/COQ3 family.

It catalyses the reaction a 3-demethylubiquinol + S-adenosyl-L-methionine = a ubiquinol + S-adenosyl-L-homocysteine + H(+). It carries out the reaction a 3-(all-trans-polyprenyl)benzene-1,2-diol + S-adenosyl-L-methionine = a 2-methoxy-6-(all-trans-polyprenyl)phenol + S-adenosyl-L-homocysteine + H(+). It participates in cofactor biosynthesis; ubiquinone biosynthesis. O-methyltransferase that catalyzes the 2 O-methylation steps in the ubiquinone biosynthetic pathway. The sequence is that of Ubiquinone biosynthesis O-methyltransferase from Rickettsia akari (strain Hartford).